Reading from the N-terminus, the 171-residue chain is uncharacterized protein (171 aa).

A helical membrane pass occupies residues 21–43 (GVAASLLILLAVYTIFQSTVVIA).

Its subcellular location is the membrane. This is an uncharacterized protein from Archaeoglobus fulgidus (strain ATCC 49558 / DSM 4304 / JCM 9628 / NBRC 100126 / VC-16).